An 89-amino-acid chain; its full sequence is uncharacterized protein (89 aa).

This is an uncharacterized protein from Treponema pallidum (strain Nichols).